We begin with the raw amino-acid sequence, 503 residues long: Probable cytosol aminopeptidase (503 aa).

Lys-274 and Asp-279 together coordinate Mn(2+). Lys-286 is an active-site residue. Residues Asp-297, Asp-356, and Glu-358 each contribute to the Mn(2+) site. The active site involves Arg-360.

Belongs to the peptidase M17 family. The cofactor is Mn(2+).

The protein resides in the cytoplasm. The enzyme catalyses Release of an N-terminal amino acid, Xaa-|-Yaa-, in which Xaa is preferably Leu, but may be other amino acids including Pro although not Arg or Lys, and Yaa may be Pro. Amino acid amides and methyl esters are also readily hydrolyzed, but rates on arylamides are exceedingly low.. It carries out the reaction Release of an N-terminal amino acid, preferentially leucine, but not glutamic or aspartic acids.. In terms of biological role, presumably involved in the processing and regular turnover of intracellular proteins. Catalyzes the removal of unsubstituted N-terminal amino acids from various peptides. This chain is Probable cytosol aminopeptidase, found in Paraburkholderia phymatum (strain DSM 17167 / CIP 108236 / LMG 21445 / STM815) (Burkholderia phymatum).